The sequence spans 413 residues: MAEHSFDVNEVIKDFPILDQKVNGKRLAYLDSTATSQTPVQVLNVLEDYYKRYNSNVHRGVHTLGSLATDGYENARETVRRFINAKYFEEIIFTRGTTASINLVAHSYGDANVEEGDEIVVTEMEHHANIVPWQQLAKRKNATLKFIPMTADGELNIEDIKQTINDKTKIVAIAHISNVLGTINDVKTIAEIAHQHGAIISVDGAQAAPHMKLDMQEMNADFYSFSGHKMLGPTGIGVLFGKRELLQKMEPIEFGGDMIDFVSKYDATWADLPTKFEAGTPLIAQAIGLAEAIRYLERIGFDAIHKYEQELTIYAYEQMSAIEGIEIYGPPKDRRAGVITFNLQDVHPHDVATAVDTEGVAVRAGHHCAQPLMKWLNVSSTARASFYIYNTKEDVDQLINALKQTKEFFSYEF.

The residue at position 229 (Lys229) is an N6-(pyridoxal phosphate)lysine. Cys368 (cysteine persulfide intermediate) is an active-site residue.

This sequence belongs to the class-V pyridoxal-phosphate-dependent aminotransferase family. Csd subfamily. It depends on pyridoxal 5'-phosphate as a cofactor.

It catalyses the reaction (sulfur carrier)-H + L-cysteine = (sulfur carrier)-SH + L-alanine. Its function is as follows. Catalyzes the removal of elemental sulfur and selenium atoms from L-cysteine, L-cystine, L-selenocysteine, and L-selenocystine to produce L-alanine. The protein is Probable cysteine desulfurase (csd) of Staphylococcus aureus (strain COL).